The following is a 376-amino-acid chain: MSKRDFYEVLGVGRDASEREIKKAYKRLAMKFHPDRNPGNKEAEASFKEVKEAYEILTDGDKKAAYDQFGHAGVDPNRGGGGFGGGADFGDVFGDVFGDIFGGGRRGGQRQAARGSDLRYNLELSLEEAVRGLTKELRIPTLAACDACDGSGAKKGSSPTTCGTCHGQGQVQMRQGFFAVQQACPTCHGRGKIIKDPCNKCHGEGRVEKSKTLSVKIPAGVDTGDRIRLSGEGEAGEYGAPPGDLYVQVSVREHAIFQRDGNNLYCEVPISFSKAALGGEIEVPTLDGKVNLKIPAETQTGRMFRMRGKGVKSVRSHAVGDLLCKVVMETPVNLNERQKELLREFEDTLTGQSKKHSPKAEGFFDGVKKFFQDLNS.

The J domain occupies 5–70; it reads DFYEVLGVGR…DKKAAYDQFG (66 aa). A CR-type zinc finger spans residues 132 to 210; it reads GLTKELRIPT…CHGEGRVEKS (79 aa). Residues C145, C148, C162, C165, C184, C187, C198, and C201 each coordinate Zn(2+). 4 CXXCXGXG motif repeats span residues 145-152, 162-169, 184-191, and 198-205; these read CDACDGSG, CGTCHGQG, CPTCHGRG, and CNKCHGEG.

It belongs to the DnaJ family. In terms of assembly, homodimer. The cofactor is Zn(2+).

Its subcellular location is the cytoplasm. In terms of biological role, participates actively in the response to hyperosmotic and heat shock by preventing the aggregation of stress-denatured proteins and by disaggregating proteins, also in an autonomous, DnaK-independent fashion. Unfolded proteins bind initially to DnaJ; upon interaction with the DnaJ-bound protein, DnaK hydrolyzes its bound ATP, resulting in the formation of a stable complex. GrpE releases ADP from DnaK; ATP binding to DnaK triggers the release of the substrate protein, thus completing the reaction cycle. Several rounds of ATP-dependent interactions between DnaJ, DnaK and GrpE are required for fully efficient folding. Also involved, together with DnaK and GrpE, in the DNA replication of plasmids through activation of initiation proteins. The polypeptide is Chaperone protein DnaJ (Shewanella halifaxensis (strain HAW-EB4)).